Reading from the N-terminus, the 171-residue chain is Glucagon family neuropeptides (171 aa).

Residues 1–22 (MYRKALLVWLLVYGIMRCTVHS) form the signal peptide. Residues 23–76 (SPTALKYPALRLEDEVYDEDGNTLPDFAFDNNPIGIGNPASVFDDMYSFYYPAE) constitute a propeptide that is removed on maturation. The segment at 145–153 (VKKYLAAVL) is important for receptor binding. A Lysine amide modification is found at K164. Residues 168 to 171 (VAYL) constitute a propeptide that is removed on maturation.

This sequence belongs to the glucagon family.

It localises to the secreted. Its function is as follows. Primary role of GRF is to release GH from the pituitary. PACAP is a neuropeptide involved in diverse array of physiological processes through activating the PACAP subfamily of class B1 G protein-coupled receptors: VIP receptor 1 (VIPR1), VIP receptor 2 (VIPR2), and PACAP type I receptor (ADCYAP1R1). Exerts neuroprotective and general cytoprotective effects due to anti-apoptotic, anti-inflammatory, and antioxidant actions. The protein is Glucagon family neuropeptides (adcyap1) of Pelophylax ridibundus (Marsh frog).